A 138-amino-acid polypeptide reads, in one-letter code: Nucleoside diphosphate kinase (138 aa).

Residues K9, F57, R85, T91, R102, and N112 each coordinate ATP. The Pros-phosphohistidine intermediate role is filled by H115.

This sequence belongs to the NDK family. As to quaternary structure, homotetramer. The cofactor is Mg(2+).

It localises to the cytoplasm. The catalysed reaction is a 2'-deoxyribonucleoside 5'-diphosphate + ATP = a 2'-deoxyribonucleoside 5'-triphosphate + ADP. The enzyme catalyses a ribonucleoside 5'-diphosphate + ATP = a ribonucleoside 5'-triphosphate + ADP. In terms of biological role, major role in the synthesis of nucleoside triphosphates other than ATP. The ATP gamma phosphate is transferred to the NDP beta phosphate via a ping-pong mechanism, using a phosphorylated active-site intermediate. The polypeptide is Nucleoside diphosphate kinase (Desulfatibacillum aliphaticivorans).